A 138-amino-acid chain; its full sequence is Proline-rich protein 34 (138 aa).

A compositionally biased stretch (pro residues) spans 22–37; that stretch reads SAPTSPPNPATRPAPG. 2 disordered regions span residues 22-55 and 81-107; these read SAPT…PTRG and APRL…SPAR.

The chain is Proline-rich protein 34 (PRR34) from Homo sapiens (Human).